The sequence spans 271 residues: Putative glucose-6-phosphate 1-epimerase (271 aa).

Residues R71 and R93 each coordinate substrate. H151 is a catalytic residue. D193 serves as a coordination point for substrate. The active site involves E249.

This sequence belongs to the glucose-6-phosphate 1-epimerase family.

The enzyme catalyses alpha-D-glucose 6-phosphate = beta-D-glucose 6-phosphate. In Haemophilus influenzae (strain ATCC 51907 / DSM 11121 / KW20 / Rd), this protein is Putative glucose-6-phosphate 1-epimerase.